The primary structure comprises 176 residues: Large ribosomal subunit protein bL17m (176 aa).

A mitochondrion-targeting transit peptide spans 1 to 8 (MRLSLAAA).

Belongs to the bacterial ribosomal protein bL17 family. Component of the mitochondrial ribosome large subunit (39S) which comprises a 16S rRNA and about 50 distinct proteins.

The protein resides in the mitochondrion. The polypeptide is Large ribosomal subunit protein bL17m (Mrpl17) (Rattus norvegicus (Rat)).